The primary structure comprises 495 residues: Glucose-6-phosphate 1-dehydrogenase (495 aa).

Residues 11–18, Arg45, 84–85, and Lys147 contribute to the NADP(+) site; these read GASGDLAK and DV. Substrate is bound by residues His177, Lys181, Glu215, and Asp234. The Proton acceptor role is filled by His239. Positions 339 and 344 each coordinate substrate.

It belongs to the glucose-6-phosphate dehydrogenase family.

The enzyme catalyses D-glucose 6-phosphate + NADP(+) = 6-phospho-D-glucono-1,5-lactone + NADPH + H(+). The protein operates within carbohydrate degradation; pentose phosphate pathway; D-ribulose 5-phosphate from D-glucose 6-phosphate (oxidative stage): step 1/3. Functionally, catalyzes the oxidation of glucose 6-phosphate to 6-phosphogluconolactone. The protein is Glucose-6-phosphate 1-dehydrogenase of Streptococcus pneumoniae serotype 4 (strain ATCC BAA-334 / TIGR4).